The following is a 482-amino-acid chain: GTPase Obg (482 aa).

The 158-residue stretch at 2 to 159 (PRFIDRVVVH…RELTLELKTV (158 aa)) folds into the Obg domain. In terms of domain architecture, OBG-type G spans 160-341 (ADVGLVGFPS…LIFALWDMVA (182 aa)). Residues 166–173 (GFPSAGKS), 191–195 (FTTLA), 212–215 (DVPG), 292–295 (NKID), and 322–324 (STV) each bind GTP. Serine 173 and threonine 193 together coordinate Mg(2+). The 79-residue stretch at 359–437 (PIPVDETAFS…IGDMTFDWEP (79 aa)) folds into the OCT domain. The disordered stretch occupies residues 450–482 (RGTDVRLEQTDRVGADERKAARKARRQSDDGEE). A compositionally biased stretch (basic and acidic residues) spans 452 to 468 (TDVRLEQTDRVGADERK).

Belongs to the TRAFAC class OBG-HflX-like GTPase superfamily. OBG GTPase family. As to quaternary structure, monomer. Mg(2+) is required as a cofactor.

It localises to the cytoplasm. Functionally, an essential GTPase which binds GTP, GDP and possibly (p)ppGpp with moderate affinity, with high nucleotide exchange rates and a fairly low GTP hydrolysis rate. Plays a role in control of the cell cycle, stress response, ribosome biogenesis and in those bacteria that undergo differentiation, in morphogenesis control. This Mycolicibacterium gilvum (strain PYR-GCK) (Mycobacterium gilvum (strain PYR-GCK)) protein is GTPase Obg.